The primary structure comprises 786 residues: Protein RDM16 (786 aa).

3 stretches are compositionally biased toward basic and acidic residues: residues 1–80, 87–112, and 123–143; these read MDKE…SRDR, RSHE…GARD, and NGER…KDAQ. Disordered stretches follow at residues 1–223, 255–283, 532–557, and 616–642; these read MDKE…SANL, KKAT…STGT, RPIE…EQKK, and EREQ…KERK. Positions 145-164 are enriched in polar residues; the sequence is SEGSGATNPTSGVTMGASTY. Residues 165-176 are compositionally biased toward low complexity; that stretch reads SSIPSEASAAPS. Residues 177-189 show a composition bias toward polar residues; sequence QTLLTKVSSISTT. Residues 190 to 203 are compositionally biased toward basic and acidic residues; the sequence is DENKASVVRSHEVP. Low complexity predominate over residues 268 to 283; that stretch reads TRVPPSTTTPAVSTGT. Positions 534–547 are enriched in pro residues; that stretch reads IEPPAEAAPPPPQP.

It is found in the nucleus. The protein localises to the nucleoplasm. Functions in the RNA-directed DNA methylation (RdDM) pathway. Acts as a pre-mRNA splicing factor, likely by affecting Pol V transcripts. Affects DNA methylation of transposable elements (TEs) and preferentially influences NRPD1- and ROS1-targeted loci. The protein is Protein RDM16 of Arabidopsis thaliana (Mouse-ear cress).